Reading from the N-terminus, the 217-residue chain is Large ribosomal subunit protein bL21m (217 aa).

The segment covering 61–81 (PPKVTTATTPEAPAAVPTSTP) has biased composition (low complexity). A disordered region spans residues 61–87 (PPKVTTATTPEAPAAVPTSTPFSQQPP).

The protein belongs to the bacterial ribosomal protein bL21 family. As to quaternary structure, component of the mitochondrial large ribosomal subunit (mt-LSU). Mature N.crassa 74S mitochondrial ribosomes consist of a small (37S) and a large (54S) subunit. The 37S small subunit contains a 16S ribosomal RNA (16S mt-rRNA) and 32 different proteins. The 54S large subunit contains a 23S rRNA (23S mt-rRNA) and 42 different proteins.

The protein resides in the mitochondrion. Its function is as follows. Component of the mitochondrial ribosome (mitoribosome), a dedicated translation machinery responsible for the synthesis of mitochondrial genome-encoded proteins, including at least some of the essential transmembrane subunits of the mitochondrial respiratory chain. The mitoribosomes are attached to the mitochondrial inner membrane and translation products are cotranslationally integrated into the membrane. The chain is Large ribosomal subunit protein bL21m (mrpl49) from Neurospora crassa (strain ATCC 24698 / 74-OR23-1A / CBS 708.71 / DSM 1257 / FGSC 987).